A 151-amino-acid polypeptide reads, in one-letter code: Transcriptional regulator MraZ (151 aa).

SpoVT-AbrB domains follow at residues 5-56 (THRH…PLPT) and 85-128 (SEEL…DAAR).

It belongs to the MraZ family. As to quaternary structure, forms oligomers.

The protein localises to the cytoplasm. It localises to the nucleoid. This chain is Transcriptional regulator MraZ, found in Acidithiobacillus ferrooxidans (strain ATCC 23270 / DSM 14882 / CIP 104768 / NCIMB 8455) (Ferrobacillus ferrooxidans (strain ATCC 23270)).